The primary structure comprises 350 residues: CMP-N-acetylneuraminate-beta-galactosamide-alpha-2,3-sialyltransferase 2 (350 aa).

At Met-1 to Arg-6 the chain is on the cytoplasmic side. The chain crosses the membrane as a helical; Signal-anchor for type II membrane protein span at residues Val-7–Ser-27. Residues His-28–Asn-350 are Lumenal-facing. 3 disulfide bridges follow: Cys-70–Cys-75, Cys-72–Cys-149, and Cys-152–Cys-291. Substrate-binding residues include Gln-116, Asn-157, and Asn-180. Asn-211 carries N-linked (GlcNAc...) asparagine glycosylation. Residues Tyr-240, Tyr-276, Gly-280, Gly-300, His-309, and His-326 each coordinate substrate.

The protein belongs to the glycosyltransferase 29 family. In terms of assembly, homodimer; disulfide-linked. Homodimer formation occurs in the endoplasmic reticulum. The soluble form derives from the membrane form by proteolytic processing. Post-translationally, N-glycosylated; necessary for proper exit from endoplasmic reticulum and trafficking to the Golgi apparatus.

The protein resides in the golgi apparatus. Its subcellular location is the golgi stack membrane. It is found in the secreted. The catalysed reaction is a beta-D-galactosyl-(1-&gt;3)-N-acetyl-alpha-D-galactosaminyl derivative + CMP-N-acetyl-beta-neuraminate = an N-acetyl-alpha-neuraminyl-(2-&gt;3)-beta-D-galactosyl-(1-&gt;3)-N-acetyl-alpha-D-galactosaminyl derivative + CMP + H(+). It carries out the reaction a ganglioside GM1 (d18:1(4E)) + CMP-N-acetyl-beta-neuraminate = a ganglioside GD1a (d18:1(4E)) + CMP + H(+). The enzyme catalyses ganglioside GM1 (d18:1(4E)/18:0) + CMP-N-acetyl-beta-neuraminate = ganglioside GD1a (18:1(4E)/18:0) + CMP + H(+). It catalyses the reaction a ganglioside GA1 + CMP-N-acetyl-beta-neuraminate = a ganglioside GM1b + CMP + H(+). The catalysed reaction is a ganglioside GA1 (d18:1(4E)) + CMP-N-acetyl-beta-neuraminate = a ganglioside GM1b (d18:1(4E)) + CMP + H(+). It carries out the reaction a globoside GalGb4Cer + CMP-N-acetyl-beta-neuraminate = a globoside MSGG + CMP + H(+). It functions in the pathway protein modification; protein glycosylation. It participates in glycolipid biosynthesis. Functionally, a beta-galactoside alpha2-3 sialyltransferase primarily involved in terminal sialylation of ganglio and globo series glycolipids. Catalyzes the transfer of sialic acid (N-acetyl-neuraminic acid; Neu5Ac) from the nucleotide sugar donor CMP-Neu5Ac onto acceptor Galbeta-(1-&gt;3)-GalNAc-terminated glycoconjugates through an alpha2-3 linkage. Sialylates GM1/GM1a, GA1/asialo-GM1 gangliosides to form GD1a and GM1b, respectively. Together with ST3GAL3, primarily responsible for biosynthesis of brain gangliosides that function as ligand for myelin-associated glycoprotein MAG on axons, regulating MAG expression and axonal myelin stability and regeneration. Responsible for the sialylation of the pluripotent stem cell- and cancer stem cell-associated antigen SSEA3, forming SSEA4. Sialylates with low efficiency asialofetuin, presumably onto O-glycosidically linked Galbeta-(1-&gt;3)-GalNAc-O-Ser. The chain is CMP-N-acetylneuraminate-beta-galactosamide-alpha-2,3-sialyltransferase 2 (St3gal2) from Rattus norvegicus (Rat).